A 712-amino-acid polypeptide reads, in one-letter code: Protein phosphatase 1 regulatory subunit 37 (712 aa).

Residues 1–12 are compositionally biased toward pro residues; it reads MEIPPQEAPPGP. Residues 1-47 are disordered; it reads MEIPPQEAPPGPGADADADAEAETEEASAEAESPTGTSPPADGRLKA. Acidic residues predominate over residues 16-29; the sequence is ADADAEAETEEASA. Residues S56 and S62 each carry the phosphoserine modification. 5 LRR repeats span residues 226–246, 254–275, 283–303, 312–332, and 340–360; these read SLAVLHLENASLSGRPLMLLA, NLRELYLADNKLNGLQDSAQLG, SLQILDLRNNHVLDSGLAYIC, GLVTLVLWNNQLTHTGMAFLG, and SLETLNLGHNPIGNEGVRNLK. The segment at 492 to 680 is disordered; that stretch reads ESGELPAVGS…PPGLEAKGGS (189 aa). A compositionally biased stretch (acidic residues) spans 514-531; it reads SDSDSDSDREEQEEEEED. The residue at position 583 (S583) is a Phosphoserine. A compositionally biased stretch (pro residues) spans 605-626; that stretch reads PPVPPTFVSSPPPSPPSPPASP. The span at 639 to 651 shows a compositional bias: polar residues; that stretch reads SEAQPQLEPSQAG.

This sequence belongs to the PPP1R37 family. In terms of assembly, interacts with PPP1CA.

Inhibits phosphatase activity of protein phosphatase 1 (PP1) complexes. The protein is Protein phosphatase 1 regulatory subunit 37 (Ppp1r37) of Mus musculus (Mouse).